A 248-amino-acid polypeptide reads, in one-letter code: 1-(5-phosphoribosyl)-5-[(5-phosphoribosylamino)methylideneamino] imidazole-4-carboxamide isomerase (248 aa).

The Proton acceptor role is filled by Asp-11. Asp-132 (proton donor) is an active-site residue.

The protein belongs to the HisA/HisF family.

It localises to the cytoplasm. The catalysed reaction is 1-(5-phospho-beta-D-ribosyl)-5-[(5-phospho-beta-D-ribosylamino)methylideneamino]imidazole-4-carboxamide = 5-[(5-phospho-1-deoxy-D-ribulos-1-ylimino)methylamino]-1-(5-phospho-beta-D-ribosyl)imidazole-4-carboxamide. It functions in the pathway amino-acid biosynthesis; L-histidine biosynthesis; L-histidine from 5-phospho-alpha-D-ribose 1-diphosphate: step 4/9. The protein is 1-(5-phosphoribosyl)-5-[(5-phosphoribosylamino)methylideneamino] imidazole-4-carboxamide isomerase of Bradyrhizobium diazoefficiens (strain JCM 10833 / BCRC 13528 / IAM 13628 / NBRC 14792 / USDA 110).